We begin with the raw amino-acid sequence, 142 residues long: Translation initiation factor 2 subunit beta (142 aa).

The protein belongs to the eIF-2-beta/eIF-5 family. In terms of assembly, heterotrimer composed of an alpha, a beta and a gamma chain.

Its function is as follows. eIF-2 functions in the early steps of protein synthesis by forming a ternary complex with GTP and initiator tRNA. This Thermococcus gammatolerans (strain DSM 15229 / JCM 11827 / EJ3) protein is Translation initiation factor 2 subunit beta.